The chain runs to 456 residues: Exodeoxyribonuclease 7 large subunit (456 aa).

The protein belongs to the XseA family. Heterooligomer composed of large and small subunits.

Its subcellular location is the cytoplasm. It carries out the reaction Exonucleolytic cleavage in either 5'- to 3'- or 3'- to 5'-direction to yield nucleoside 5'-phosphates.. Its function is as follows. Bidirectionally degrades single-stranded DNA into large acid-insoluble oligonucleotides, which are then degraded further into small acid-soluble oligonucleotides. In Escherichia coli (strain ATCC 8739 / DSM 1576 / NBRC 3972 / NCIMB 8545 / WDCM 00012 / Crooks), this protein is Exodeoxyribonuclease 7 large subunit.